The following is a 505-amino-acid chain: Maturase K (505 aa).

The protein belongs to the intron maturase 2 family. MatK subfamily.

The protein resides in the plastid. The protein localises to the chloroplast. Functionally, usually encoded in the trnK tRNA gene intron. Probably assists in splicing its own and other chloroplast group II introns. This is Maturase K from Morus indica (Mulberry).